The following is a 655-amino-acid chain: Probable glucan endo-1,3-beta-glucosidase btgC (655 aa).

Disordered stretches follow at residues 1-61 and 89-114; these read MSGD…ATPG and SGVD…PGSD. The Cytoplasmic segment spans residues 1 to 282; sequence MSGDPRSFSF…PKPGTGSRKR (282 aa). The segment covering 19–33 has biased composition (polar residues); that stretch reads DSSQQPLHPTNTMAD. Basic and acidic residues predominate over residues 89 to 98; sequence SGVDAFRDTD. The chain crosses the membrane as a helical; Signal-anchor for type II membrane protein span at residues 283–303; it reads GWIVGIILAVVIVGAIVGGAV. Residues 304–655 lie on the Extracellular side of the membrane; the sequence is GGTLGNREKE…IPDCGGKTAT (352 aa). The tract at residues 305–338 is disordered; it reads GTLGNREKESPSSSETASGDEKVNGDLGKDSDEI. Residues 323 to 338 are compositionally biased toward basic and acidic residues; sequence GDEKVNGDLGKDSDEI. N426 carries N-linked (GlcNAc...) asparagine glycosylation. E458 (proton donor) is an active-site residue. E557 (nucleophile) is an active-site residue. N-linked (GlcNAc...) asparagine glycans are attached at residues N576 and N602.

This sequence belongs to the glycosyl hydrolase 17 family.

It is found in the cell membrane. The catalysed reaction is Hydrolysis of (1-&gt;3)-beta-D-glucosidic linkages in (1-&gt;3)-beta-D-glucans.. In terms of biological role, glucanases play a role in cell expansion during growth, in cell-cell fusion during mating, and in spore release during sporulation. This enzyme may be involved in beta-glucan degradation. Active on laminarin and lichenan. The sequence is that of Probable glucan endo-1,3-beta-glucosidase btgC (btgC) from Aspergillus terreus (strain NIH 2624 / FGSC A1156).